A 330-amino-acid chain; its full sequence is Protein ANTHESIS POMOTING FACTOR 1 (330 aa).

WD repeat units follow at residues 22-61 (DFGGKIHSVGFHRTDDLLVTSSEDDSLRLFDIANAKQLKI), 112-151 (GHKDRVVSLCMSPINDSFMSGSLDRSVRLWDLRVNACQGI), 153-191 (HLRGRPAVAYDQQGLVFAIAMEGGAVKLFDSRCYDKGPF), 198-237 (GDTAEVNDIKFSNDGKSMLLTTTNNNIYVLDAYRGEKKCG), 242-281 (PSQGTPIEATFTPDGKYVLSGSGDGTLHAWNIENPSEVAR), and 284-323 (NNIGVVSCLKWAPRRAMFVAASTVLTFWIPNDGESPAPAD).

It belongs to the WD repeat SWD2 family. Expressed in the shoot apical meristem (SAM), embryos, seedlings, cotyledons, leaves primordia, young leaves and roots.

The protein resides in the nucleus. Component of a chromatin regulatory complex involved in regulating chromatin structure in the nucleus. Promotes flowering under long days (LD) via the regulation of bolting. The protein is Protein ANTHESIS POMOTING FACTOR 1 of Arabidopsis thaliana (Mouse-ear cress).